Here is a 137-residue protein sequence, read N- to C-terminus: Large ribosomal subunit protein uL16 (137 aa).

Belongs to the universal ribosomal protein uL16 family. Part of the 50S ribosomal subunit.

Functionally, binds 23S rRNA and is also seen to make contacts with the A and possibly P site tRNAs. The chain is Large ribosomal subunit protein uL16 from Bradyrhizobium sp. (strain BTAi1 / ATCC BAA-1182).